A 253-amino-acid chain; its full sequence is 3-deoxy-manno-octulosonate cytidylyltransferase (253 aa).

The protein belongs to the KdsB family.

The protein localises to the cytoplasm. It carries out the reaction 3-deoxy-alpha-D-manno-oct-2-ulosonate + CTP = CMP-3-deoxy-beta-D-manno-octulosonate + diphosphate. Its pathway is nucleotide-sugar biosynthesis; CMP-3-deoxy-D-manno-octulosonate biosynthesis; CMP-3-deoxy-D-manno-octulosonate from 3-deoxy-D-manno-octulosonate and CTP: step 1/1. The protein operates within bacterial outer membrane biogenesis; lipopolysaccharide biosynthesis. Functionally, activates KDO (a required 8-carbon sugar) for incorporation into bacterial lipopolysaccharide in Gram-negative bacteria. This Haemophilus ducreyi (strain 35000HP / ATCC 700724) protein is 3-deoxy-manno-octulosonate cytidylyltransferase.